Here is a 190-residue protein sequence, read N- to C-terminus: MKQILDFIPLIVFFALYKMYDIYVATGALIVATAIQIVLTFALYKKVEKMQLITFAMVAIFGGMTIFLHDENFIKWKVTIVYAIFAIGLAVSHAMGKSAIKGMLGKEITLPDAIWTKINWAWVAFFSFCAGLNVYVAFELPLDVWVNFKVFGLLIATFAYMIATGFYIYKHMPKEQKEQKEKSSDVSLDD.

A run of 5 helical transmembrane segments spans residues 22 to 42, 50 to 70, 76 to 96, 118 to 138, and 148 to 168; these read IYVA…LTFA, MQLI…FLHD, WKVT…HAMG, INWA…YVAF, and FKVF…GFYI.

Belongs to the YciB family.

The protein localises to the cell inner membrane. In terms of biological role, plays a role in cell envelope biogenesis, maintenance of cell envelope integrity and membrane homeostasis. The sequence is that of Inner membrane-spanning protein YciB from Vibrio campbellii (strain ATCC BAA-1116).